Here is a 330-residue protein sequence, read N- to C-terminus: GTPase Obg (330 aa).

Residues 1–159 form the Obg domain; the sequence is MHFIDEVKIY…MWIHLSLKLL (159 aa). One can recognise an OBG-type G domain in the interval 160-327; the sequence is SDVGLVGLPN…IVKLALETIK (168 aa). Residues 166-173, 191-195, 212-215, 279-282, and 308-310 each bind GTP; these read GLPNAGKS, FTTLV, DIPG, NKCD, and STC. Mg(2+) contacts are provided by Ser173 and Thr193.

This sequence belongs to the TRAFAC class OBG-HflX-like GTPase superfamily. OBG GTPase family. Monomer. The cofactor is Mg(2+).

The protein resides in the cytoplasm. In terms of biological role, an essential GTPase which binds GTP, GDP and possibly (p)ppGpp with moderate affinity, with high nucleotide exchange rates and a fairly low GTP hydrolysis rate. Plays a role in control of the cell cycle, stress response, ribosome biogenesis and in those bacteria that undergo differentiation, in morphogenesis control. In Rickettsia conorii (strain ATCC VR-613 / Malish 7), this protein is GTPase Obg.